A 321-amino-acid chain; its full sequence is Olfactory receptor 3A3 (321 aa).

The Extracellular segment spans residues 1–34 (MSLQKLMEPEAGTNRTAVAEFILLGLVQTEEMQP). An N-linked (GlcNAc...) asparagine glycan is attached at N14. Residues 35-58 (VVFVLLLFAYLVTTGGNLSILAAV) form a helical membrane-spanning segment. The Cytoplasmic segment spans residues 59–66 (LVEPKLHA). A helical transmembrane segment spans residues 67 to 88 (PMYFFLGNLSVLDVGCITVTVP). The Extracellular segment spans residues 89 to 109 (AMLGRLLSHKSTISYDACLSQ). C106 and C198 form a disulfide bridge. The chain crosses the membrane as a helical span at residues 110 to 129 (LFFFHLLAGMDCFLLTAMAY). Residues 130–149 (DRLLAICQPLTYSTRMSQTV) lie on the Cytoplasmic side of the membrane. Residues 150-167 (QRMLVAASWACAFTNALT) form a helical membrane-spanning segment. At 168–205 (HTVAMSTLNFCGPNEVNHFYCDLPQLFQLSCSSTQLNE) the chain is on the extracellular side. The chain crosses the membrane as a helical span at residues 206-228 (LLLFVAAAFMAVAPLVFISVSYA). At 229-245 (HVVAAVLQIRSAEGRKK) the chain is on the cytoplasmic side. A helical transmembrane segment spans residues 246–268 (AFSTCGSHLTVVGIFYGTGVFSY). Topologically, residues 269 to 281 (MRLGSVESSDKDK) are extracellular. The helical transmembrane segment at 282 to 301 (GVGVFMTVINPMLNPLIYSL) threads the bilayer. At 302–321 (RNTDVQGALCQLLVGKRSLT) the chain is on the cytoplasmic side.

It belongs to the G-protein coupled receptor 1 family.

It localises to the cell membrane. Its function is as follows. Odorant receptor. The protein is Olfactory receptor 3A3 (OR3A3) of Homo sapiens (Human).